We begin with the raw amino-acid sequence, 148 residues long: Cytochrome c oxidase subunit 4, mitochondrial (148 aa).

A mitochondrion-targeting transit peptide spans 1–24 (MFALRSIRSATKAFQTTSIVSQRG).

As to quaternary structure, slime mold cytochrome c oxidase consists of at least seven different polypeptides species, subunits I, II, III, IV, V, VI, and VIIe/s in order of MW.

Its subcellular location is the mitochondrion inner membrane. It carries out the reaction 4 Fe(II)-[cytochrome c] + O2 + 8 H(+)(in) = 4 Fe(III)-[cytochrome c] + 2 H2O + 4 H(+)(out). In terms of biological role, this protein is one of the nuclear-coded polypeptide chains of cytochrome c oxidase, the terminal oxidase in mitochondrial electron transport. This Dictyostelium discoideum (Social amoeba) protein is Cytochrome c oxidase subunit 4, mitochondrial (cxdA).